We begin with the raw amino-acid sequence, 357 residues long: Sorbitol dehydrogenase (357 aa).

Ala2 is modified (N-acetylalanine). A Zn(2+)-binding site is contributed by Cys45. Position 51 (Tyr51) interacts with substrate. 2 residues coordinate Zn(2+): His70 and Glu71. Glu156 lines the substrate pocket. Residues Ile184, Asp204, and Arg209 each coordinate NAD(+). 2 positions are modified to phosphoserine: Ser211 and Ser225. NAD(+)-binding positions include 273 to 275 and 297 to 299; these read VGL and VFR. The substrate site is built by Arg299 and Tyr300.

This sequence belongs to the zinc-containing alcohol dehydrogenase family. Homotetramer. Zn(2+) is required as a cofactor. In terms of tissue distribution, expressed in liver. Expressed in kidney and epithelial cells of both benign and malignant prostate tissue. Expressed in epididymis (at protein level).

Its subcellular location is the mitochondrion membrane. It is found in the cell projection. It localises to the cilium. The protein resides in the flagellum. It carries out the reaction keto-D-fructose + NADH + H(+) = D-sorbitol + NAD(+). It catalyses the reaction L-threitol + NAD(+) = L-erythrulose + NADH + H(+). The enzyme catalyses xylitol + NAD(+) = D-xylulose + NADH + H(+). The catalysed reaction is ribitol + NAD(+) = D-ribulose + NADH + H(+). It carries out the reaction (R,R)-butane-2,3-diol + NAD(+) = (R)-acetoin + NADH + H(+). It catalyses the reaction L-iditol + NAD(+) = keto-L-sorbose + NADH + H(+). With respect to regulation, inhibited by CP-166,572, an inhibitor that is competitive with fructose. Also competitively inhibited by phenanthroline and 4-methylpyrazole in vitro. Polyol dehydrogenase that catalyzes the reversible NAD(+)-dependent oxidation of various sugar alcohols. Is mostly active with D-sorbitol (D-glucitol), L-threitol, xylitol and ribitol as substrates, leading to the C2-oxidized products D-fructose, L-erythrulose, D-xylulose, and D-ribulose, respectively. Is a key enzyme in the polyol pathway that interconverts glucose and fructose via sorbitol, which constitutes an important alternate route for glucose metabolism. The polyol pathway is believed to be involved in the etiology of diabetic complications, such as diabetic neuropathy and retinopathy, induced by hyperglycemia. May play a role in sperm motility by using sorbitol as an alternative energy source for sperm motility. May have a more general function in the metabolism of secondary alcohols since it also catalyzes the stereospecific oxidation of (2R,3R)-2,3-butanediol. To a lesser extent, can also oxidize L-arabinitol, galactitol and D-mannitol and glycerol in vitro. Oxidizes neither ethanol nor other primary alcohols. Cannot use NADP(+) as the electron acceptor. The protein is Sorbitol dehydrogenase (SORD) of Homo sapiens (Human).